Here is a 220-residue protein sequence, read N- to C-terminus: Large ribosomal subunit protein uL1 (220 aa).

It belongs to the universal ribosomal protein uL1 family. Part of the 50S ribosomal subunit.

Binds directly to 23S rRNA. The L1 stalk is quite mobile in the ribosome, and is involved in E site tRNA release. Functionally, protein L1 is also a translational repressor protein, it controls the translation of the L11 operon by binding to its mRNA. This chain is Large ribosomal subunit protein uL1, found in Ehrlichia canis (strain Jake).